Consider the following 63-residue polypeptide: Cysteine-rich peptide clone 2 (63 aa).

The signal sequence occupies residues 1–23; sequence MHFSGVVLILLSMTLVNFVFVET. Cystine bridges form between Cys-33/Cys-53, Cys-38/Cys-58, and Cys-42/Cys-60.

In terms of tissue distribution, expressed by the venom gland.

It is found in the secreted. In Tityus costatus (Brazilian scorpion), this protein is Cysteine-rich peptide clone 2.